We begin with the raw amino-acid sequence, 599 residues long: Protein ref(2)P (599 aa).

In terms of domain architecture, PB1 spans 3–88; sequence EKLLKITYQG…CESNMHVQVA (86 aa). The ZZ-type zinc finger occupies 122–173; that stretch reads HDSVQCDGCGLAPLIGFRYKCVQCSNFDLCQKCESAHKHPEHLMLRMPTNNG. Residues C127, C130, C142, C145, C151, C154, H160, and H163 each contribute to the Zn(2+) site. Disordered regions lie at residues 192 to 225, 245 to 319, 357 to 453, and 507 to 544; these read RRSR…HARR, TTAT…INLD, GIFA…LDPE, and ASAN…DDKR. Residues 199-211 are compositionally biased toward low complexity; the sequence is PFQEASQPAPAAE. The span at 276–286 shows a compositional bias: basic and acidic residues; that stretch reads KATESEAKPTE. A compositionally biased stretch (polar residues) spans 291-319; sequence NTDQSVPTTEDPVTTPRSTEPTTPVINLD. A compositionally biased stretch (low complexity) spans 375-411; it reads QSQSSGQSAASSASQSAVPSAAPSANQSNVPSANQSA. 3 consecutive repeat copies span residues 386–393, 399–406, and 407–413. The segment at 386 to 413 is 3 X 8 AA repeats of S-A-N-Q-S-X-X-P; the sequence is SASQSAVPSAAPSANQSNVPSANQSATP. Over residues 412–423 the composition is skewed to polar residues; sequence TPSISGSISDAQ. Over residues 511–536 the composition is skewed to low complexity; the sequence is TQTAQVDTVSTSTSTTSVTTNSVGTS. The UBA domain occupies 550–595; that stretch reads HTDERINQSIHAMMAMGFSNEGAWLTQLLESVQGNIPAALDVMHVS.

In terms of assembly, interacts with aPKC and Traf6.

It localises to the nucleus. Its subcellular location is the cytoplasm. Functionally, required for selective autophagy activation by ubiquitinated proteins. Implicated in sigma rhabdovirus multiplication and necessary for male fertility. Involved in activating transcription of Drs. The polypeptide is Protein ref(2)P (ref(2)P) (Drosophila simulans (Fruit fly)).